Consider the following 2167-residue polypeptide: Beige protein homolog 1 (2167 aa).

The region spanning 1368-1499 is the BEACH-type PH domain; it reads KDNDSIATIW…VRDDVLRVLN (132 aa). The BEACH domain occupies 1545 to 1839; it reads SANNSLIDGF…QIFQEPHPEK (295 aa). Residue Lys-1667 forms a Glycyl lysine isopeptide (Lys-Gly) (interchain with G-Cter in ubiquitin) linkage. 5 WD repeats span residues 1927–1965, 1976–2015, 2017–2054, 2072–2111, and 2129–2167; these read THMA…HSVS, GHLC…LVRQ, TNDA…YTSK, KLDA…HNEW, and SIKG…AIWY.

It is found in the cytoplasm. It localises to the membrane. In terms of biological role, may be involved in protein sorting and cell wall formation. This chain is Beige protein homolog 1 (BPH1), found in Saccharomyces cerevisiae (strain ATCC 204508 / S288c) (Baker's yeast).